Here is a 111-residue protein sequence, read N- to C-terminus: Probable 4-amino-4-deoxy-L-arabinose-phosphoundecaprenol flippase subunit ArnE (111 aa).

Topologically, residues 1 to 35 (MIWLTLVFASLLSVAGQLCQKQATCFAAVNKRRKH) are cytoplasmic. Residues 36 to 56 (IVLWLGLALACLGLAMVLWLL) traverse the membrane as a helical segment. One can recognise an EamA domain in the interval 40 to 109 (LGLALACLGL…IIGGIVILGS (70 aa)). Residues 57–60 (VLQN) are Periplasmic-facing. Residues 61 to 81 (VPVGIAYPMLSLNFVWVTLAA) traverse the membrane as a helical segment. Topologically, residues 82 to 87 (VKLWHE) are cytoplasmic. The helical transmembrane segment at 88 to 108 (PVSLRHWCGVAFIIGGIVILG) threads the bilayer. The Periplasmic portion of the chain corresponds to 109 to 111 (STV).

The protein belongs to the ArnE family. In terms of assembly, heterodimer of ArnE and ArnF.

It is found in the cell inner membrane. The protein operates within bacterial outer membrane biogenesis; lipopolysaccharide biosynthesis. Its function is as follows. Translocates 4-amino-4-deoxy-L-arabinose-phosphoundecaprenol (alpha-L-Ara4N-phosphoundecaprenol) from the cytoplasmic to the periplasmic side of the inner membrane. The sequence is that of Probable 4-amino-4-deoxy-L-arabinose-phosphoundecaprenol flippase subunit ArnE from Escherichia coli (strain UTI89 / UPEC).